A 609-amino-acid chain; its full sequence is UvrABC system protein C (609 aa).

A GIY-YIG domain is found at 16–94; sequence SSAGVYRMYD…IKQYMPKYNV (79 aa). The UVR domain maps to 203-238; that stretch reads QQVISALVDKMELAAERQAYEQAARFRDQIMALRKV.

The protein belongs to the UvrC family. In terms of assembly, interacts with UvrB in an incision complex.

It is found in the cytoplasm. The UvrABC repair system catalyzes the recognition and processing of DNA lesions. UvrC both incises the 5' and 3' sides of the lesion. The N-terminal half is responsible for the 3' incision and the C-terminal half is responsible for the 5' incision. The polypeptide is UvrABC system protein C (Shewanella baltica (strain OS185)).